A 402-amino-acid chain; its full sequence is MKRFLKAWRKTSLIKKITIGVVIGLFLGILVPKASAIGLLGQLFVGGLKAIAPLLVFTLVISALSQHREGGKTNMSTIIGLYITATFAAALIAVVVNYIFPLTLILKTPAKTDLLPPKGISEVFQSLLLKIVDNPIHAITEANYMSILFWAVIFGLAMRSSNQRTKDLMQTFADATSQVVKWIINLAPIGIMGLVFTSISENGIAILGDYGLLILVLVGTMLFVALVVNPIIAFVMMRKNPYPLVLRCLKDSGITAFFTRSSAANIPVNMRLCEDLGLDKDTYSVSIPLGAAINMAGAAITINILTLAAVNTLGITVDFPTAFLLSVVAAVSACGASGVTGGSLLLIPVACSLFGISNDVAMQVVGVGFIVGVIQDSCETALNSSTDVLFTAVAEKSVFGKK.

The next 9 membrane-spanning stretches (helical) occupy residues 19–39, 43–63, 86–106, 138–158, 179–199, 212–232, 287–307, 327–347, and 354–374; these read IGVVIGLFLGILVPKASAIGL, LFVGGLKAIAPLLVFTLVISA, TFAAALIAVVVNYIFPLTLIL, AITEANYMSILFWAVIFGLAM, VVKWIINLAPIGIMGLVFTSI, LLILVLVGTMLFVALVVNPII, IPLGAAINMAGAAITINILTL, VVAAVSACGASGVTGGSLLLI, and FGISNDVAMQVVGVGFIVGVI.

It belongs to the dicarboxylate/amino acid:cation symporter (DAACS) (TC 2.A.23) family.

It is found in the cell membrane. It carries out the reaction L-serine(in) + Na(+)(in) = L-serine(out) + Na(+)(out). The enzyme catalyses L-threonine(in) + Na(+)(in) = L-threonine(out) + Na(+)(out). Functionally, involved in the import of serine and threonine into the cell, with the concomitant import of sodium (symport system). This is Serine/threonine transporter SstT from Streptococcus agalactiae serotype III (strain NEM316).